The sequence spans 758 residues: 1-phosphatidylinositol 4,5-bisphosphate phosphodiesterase delta-4 (758 aa).

The 109-residue stretch at 16–124 (QLMQAGSPMR…WIQGLEKLIE (109 aa)) folds into the PH domain. Positions 26 to 53 (KVKSRSWKKQRYFKLQEDCMTIWYNSKK) are substrate binding. EF-hand domains are found at residues 134-169 (LMDQ…MNVD), 170-205 (MSEH…LTQR), and 206-237 (DEVL…GQLE). The Ca(2+) site is built by Asp-147, Asn-149, Asp-151, Arg-153, Glu-158, Asp-183, Ser-185, Ser-187, Thr-189, and Glu-194. The GBA signature appears at 213-243 (QDFSKDGKKLTLLEFVDFLQQGQLEEENTEE). The region spanning 290–435 (QDMMQPLCHY…LRGKILLKGK (146 aa)) is the PI-PLC X-box domain. His-305 is a catalytic residue. The Ca(2+) site is built by Asn-306, Glu-335, and Asp-337. His-350 is an active-site residue. A Ca(2+)-binding site is contributed by Glu-384. Substrate is bound by residues Lys-433 and Lys-435. The span at 446–468 (EQPDDSLGEVSDEEENIEVEEER) shows a compositional bias: acidic residues. Residues 446-479 (EQPDDSLGEVSDEEENIEVEEERNEDKKRAKKSK) are disordered. Residues 486–602 (LSDCVIYCKS…GYVLKPSFMR (117 aa)) enclose the PI-PLC Y-box domain. The substrate site is built by Ser-515 and Arg-542. The C2 domain maps to 602-731 (RHVETTFNPD…SGYRHIHLLS (130 aa)). Ile-645, Asp-647, Asn-671, Asp-700, Tyr-701, and Asp-702 together coordinate Ca(2+). The short motif at 726–729 (HIHL) is the PDZ-binding element.

Ca(2+) is required as a cofactor.

The protein localises to the membrane. Its subcellular location is the nucleus. The protein resides in the cytoplasm. It is found in the endoplasmic reticulum. It carries out the reaction a 1,2-diacyl-sn-glycero-3-phospho-(1D-myo-inositol-4,5-bisphosphate) + H2O = 1D-myo-inositol 1,4,5-trisphosphate + a 1,2-diacyl-sn-glycerol + H(+). It catalyses the reaction a 1,2-diacyl-sn-glycero-3-phospho-(1D-myo-inositol) + H2O = 1D-myo-inositol 1-phosphate + a 1,2-diacyl-sn-glycerol + H(+). Hydrolyzes the phosphatidylinositol 4,5-bisphosphate (PIP2) to generate 2 second messenger molecules diacylglycerol (DAG) and inositol 1,4,5-trisphosphate (IP3). DAG mediates the activation of protein kinase C (PKC), while IP3 releases Ca(2+) from intracellular stores. This is 1-phosphatidylinositol 4,5-bisphosphate phosphodiesterase delta-4 (plcd4) from Xenopus laevis (African clawed frog).